We begin with the raw amino-acid sequence, 331 residues long: Anthranilate phosphoribosyltransferase (331 aa).

Residues glycine 78, 81–82, threonine 86, 88–91, 106–114, and serine 118 each bind 5-phospho-alpha-D-ribose 1-diphosphate; these read GD, NVST, and KHGNYSVSS. Glycine 78 provides a ligand contact to anthranilate. Serine 90 provides a ligand contact to Mg(2+). Asparagine 109 is a binding site for anthranilate. Arginine 164 lines the anthranilate pocket. Mg(2+) contacts are provided by aspartate 222 and glutamate 223.

The protein belongs to the anthranilate phosphoribosyltransferase family. Homodimer. Mg(2+) serves as cofactor.

The enzyme catalyses N-(5-phospho-beta-D-ribosyl)anthranilate + diphosphate = 5-phospho-alpha-D-ribose 1-diphosphate + anthranilate. Its pathway is amino-acid biosynthesis; L-tryptophan biosynthesis; L-tryptophan from chorismate: step 2/5. Functionally, catalyzes the transfer of the phosphoribosyl group of 5-phosphorylribose-1-pyrophosphate (PRPP) to anthranilate to yield N-(5'-phosphoribosyl)-anthranilate (PRA). The polypeptide is Anthranilate phosphoribosyltransferase (Haloarcula marismortui (strain ATCC 43049 / DSM 3752 / JCM 8966 / VKM B-1809) (Halobacterium marismortui)).